A 600-amino-acid polypeptide reads, in one-letter code: Elongation factor 4 (600 aa).

One can recognise a tr-type G domain in the interval 4–186 (DTIRNFSIIA…EIVKKIPPPE (183 aa)). GTP is bound by residues 16-21 (DHGKST) and 133-136 (NKID).

The protein belongs to the TRAFAC class translation factor GTPase superfamily. Classic translation factor GTPase family. LepA subfamily.

It localises to the cell inner membrane. The enzyme catalyses GTP + H2O = GDP + phosphate + H(+). In terms of biological role, required for accurate and efficient protein synthesis under certain stress conditions. May act as a fidelity factor of the translation reaction, by catalyzing a one-codon backward translocation of tRNAs on improperly translocated ribosomes. Back-translocation proceeds from a post-translocation (POST) complex to a pre-translocation (PRE) complex, thus giving elongation factor G a second chance to translocate the tRNAs correctly. Binds to ribosomes in a GTP-dependent manner. This is Elongation factor 4 from Geobacter sulfurreducens (strain ATCC 51573 / DSM 12127 / PCA).